Reading from the N-terminus, the 1147-residue chain is ATP-dependent helicase/deoxyribonuclease subunit B (1147 aa).

8-15 (GGSGAGKS) provides a ligand contact to ATP. Residues Cys-780, Cys-1092, Cys-1095, and Cys-1101 each contribute to the [4Fe-4S] cluster site.

It belongs to the helicase family. AddB/RexB type 1 subfamily. Heterodimer of AddA and AddB. The cofactor is Mg(2+). [4Fe-4S] cluster is required as a cofactor.

The heterodimer acts as both an ATP-dependent DNA helicase and an ATP-dependent, dual-direction single-stranded exonuclease. Recognizes the chi site generating a DNA molecule suitable for the initiation of homologous recombination. The AddB subunit has 5' -&gt; 3' nuclease activity but not helicase activity. This chain is ATP-dependent helicase/deoxyribonuclease subunit B, found in Lachnoclostridium phytofermentans (strain ATCC 700394 / DSM 18823 / ISDg) (Clostridium phytofermentans).